Here is a 432-residue protein sequence, read N- to C-terminus: E3 ubiquitin-protein ligase RNF135 (432 aa).

The RING-type zinc-finger motif lies at 21–63 (CIICQGLLDWPATLPCGHSFCRHCLEALWGARDARRWACPTCR). The disordered stretch occupies residues 95–121 (GSDPAHCPCPGSSSLSSAAARPRRRPE). The segment covering 102 to 114 (PCPGSSSLSSAAA) has biased composition (low complexity). Coiled coils occupy residues 121–156 (ELQRVAVEKSITEVAQELTELVEHLVDIVRSLQNQR) and 191–216 (DTAAGKIRDILHDLEEIQEKLQESVT). A B30.2/SPRY domain is found at 241 to 432 (PDQSHPALRR…NYLIIKQVKV (192 aa)).

As to quaternary structure, homodimer. Interacts (homodimer) with RIGI (double-stranded RNA-bound oligomeric form); involved in both RIGI ubiquitination, oligomerization into filaments associated with viral RNAs and the bridging of these filaments. Interacts with UBE2D3 and UBE2N; E2 ubiquitin ligases involved in RNF135-mediated ubiquitination of RIGI and activation of the RIG-I signaling pathway. Interacts with PCBP2. (Microbial infection) Cleaved and inactivated by hepatitis C virus NS3/NS4A. In terms of tissue distribution, expressed in skeletal muscle, spleen, kidney, placenta, prostate, stomach, thyroid and tongue. Also weakly expressed in heart, thymus, liver and lung.

The protein resides in the cytoplasm. Its subcellular location is the stress granule. The catalysed reaction is S-ubiquitinyl-[E2 ubiquitin-conjugating enzyme]-L-cysteine + [acceptor protein]-L-lysine = [E2 ubiquitin-conjugating enzyme]-L-cysteine + N(6)-ubiquitinyl-[acceptor protein]-L-lysine.. It functions in the pathway protein modification; protein ubiquitination. In terms of biological role, E2-dependent E3 ubiquitin-protein ligase that functions as a RIGI coreceptor in the sensing of viral RNAs in cell cytoplasm and the activation of the antiviral innate immune response. Together with the UBE2D3, UBE2N and UB2V1 E2 ligases, catalyzes the 'Lys-63'-linked polyubiquitination of RIGI oligomerized on viral RNAs, an essential step in the activation of the RIG-I signaling pathway. Through a ubiquitin-independent parallel mechanism, which consists in bridging RIGI filaments forming on longer viral RNAs, further activates the RIG-I signaling pathway. This second mechanism that synergizes with the ubiquitin-dependent one would thereby allow an RNA length-dependent regulation of the RIG-I signaling pathway. Associated with the E2 ligase UBE2N, also constitutively synthesizes unanchored 'Lys-63'-linked polyubiquitin chains that may also activate the RIG-I signaling pathway. The protein is E3 ubiquitin-protein ligase RNF135 of Homo sapiens (Human).